We begin with the raw amino-acid sequence, 439 residues long: CBL-interacting protein kinase 14 (439 aa).

The Protein kinase domain occupies 12–267 (YELGRLLGKG…IQKIKESTWF (256 aa)). Residues 18-26 (LGKGTFGKV) and Lys-41 contribute to the ATP site. Catalysis depends on Asp-135, which acts as the Proton acceptor. The tract at residues 153-182 (DFGLSALSESKRQDGLLHTTCGTPAYVAPE) is activation loop. Residues 298–333 (RKKNAHEDVKPMSVTNLNAFEIISFSKGFDLSGMFI) enclose the NAF domain. Residues 338 to 367 (RNEARFTSDKSASTIISKLEDVAKALNLRV) form a PPI region.

Belongs to the protein kinase superfamily. CAMK Ser/Thr protein kinase family. SNF1 subfamily. The cofactor is Mn(2+).

The enzyme catalyses L-seryl-[protein] + ATP = O-phospho-L-seryl-[protein] + ADP + H(+). It catalyses the reaction L-threonyl-[protein] + ATP = O-phospho-L-threonyl-[protein] + ADP + H(+). CIPK serine-threonine protein kinases interact with CBL proteins. Binding of a CBL protein to the regulatory NAF domain of CIPK protein lead to the activation of the kinase in a calcium-dependent manner. This chain is CBL-interacting protein kinase 14 (CIPK14), found in Oryza sativa subsp. japonica (Rice).